Consider the following 202-residue polypeptide: Glycerol-3-phosphate acyltransferase (202 aa).

6 helical membrane passes run 2-22 (MIVV…GYVI), 54-74 (FIVT…PIWF), 85-105 (FFTH…YPIY), 120-140 (VVLG…FGVL), 141-161 (YIFK…VIGS), and 162-182 (LIIQ…ILIV).

This sequence belongs to the PlsY family. In terms of assembly, probably interacts with PlsX.

Its subcellular location is the cell membrane. It carries out the reaction an acyl phosphate + sn-glycerol 3-phosphate = a 1-acyl-sn-glycero-3-phosphate + phosphate. Its pathway is lipid metabolism; phospholipid metabolism. In terms of biological role, catalyzes the transfer of an acyl group from acyl-phosphate (acyl-PO(4)) to glycerol-3-phosphate (G3P) to form lysophosphatidic acid (LPA). This enzyme utilizes acyl-phosphate as fatty acyl donor, but not acyl-CoA or acyl-ACP. The sequence is that of Glycerol-3-phosphate acyltransferase from Staphylococcus haemolyticus (strain JCSC1435).